The chain runs to 441 residues: NADH-quinone oxidoreductase subunit D 1 (441 aa).

Belongs to the complex I 49 kDa subunit family. In terms of assembly, NDH-1 is composed of 14 different subunits. Subunits NuoB, C, D, E, F, and G constitute the peripheral sector of the complex.

It localises to the cell membrane. The enzyme catalyses a quinone + NADH + 5 H(+)(in) = a quinol + NAD(+) + 4 H(+)(out). Its function is as follows. NDH-1 shuttles electrons from NADH, via FMN and iron-sulfur (Fe-S) centers, to quinones in the respiratory chain. The immediate electron acceptor for the enzyme in this species is believed to be a menaquinone. Couples the redox reaction to proton translocation (for every two electrons transferred, four hydrogen ions are translocated across the cytoplasmic membrane), and thus conserves the redox energy in a proton gradient. The chain is NADH-quinone oxidoreductase subunit D 1 from Salinispora arenicola (strain CNS-205).